The chain runs to 591 residues: Probable acetolactate synthase large subunit (591 aa).

Glutamate 47 contacts thiamine diphosphate. FAD contacts are provided by residues arginine 149, 258–279 (HGTKAANYAVTECDVLIAIGCR), and 301–320 (DIDPAEIGKNVRADIPIVGD). The tract at residues 396-476 (QNQMWMAHFF…VVICIFDNRT (81 aa)) is thiamine pyrophosphate binding. 2 residues coordinate Mg(2+): aspartate 447 and asparagine 474.

This sequence belongs to the TPP enzyme family. In terms of assembly, dimer of large and small chains. The cofactor is Mg(2+). Requires thiamine diphosphate as cofactor.

The catalysed reaction is 2 pyruvate + H(+) = (2S)-2-acetolactate + CO2. The protein operates within amino-acid biosynthesis; L-isoleucine biosynthesis; L-isoleucine from 2-oxobutanoate: step 1/4. It participates in amino-acid biosynthesis; L-valine biosynthesis; L-valine from pyruvate: step 1/4. The polypeptide is Probable acetolactate synthase large subunit (ilvB) (Methanocaldococcus jannaschii (strain ATCC 43067 / DSM 2661 / JAL-1 / JCM 10045 / NBRC 100440) (Methanococcus jannaschii)).